The sequence spans 670 residues: Sodium/potassium/calcium exchanger 2 (670 aa).

Topologically, residues 1 to 38 (MDLHQSATVRLLQEWCSHESPSGCRRHYNTRKKLKLIR) are cytoplasmic. Residues 39–59 (VIGLVMGLVAVSTVPFSISAF) form a helical membrane-spanning segment. Topologically, residues 60 to 133 (TETYSQNNRG…DVFSLEERRK (74 aa)) are extracellular. Disordered regions lie at residues 67–86 (NRGE…HRQR) and 91–122 (LNDK…GDYP). A compositionally biased stretch (basic and acidic residues) spans 106–122 (QEDRSENGTDHAQGDYP). Asn-112 carries N-linked (GlcNAc...) asparagine glycosylation. The chain crosses the membrane as a helical span at residues 134 to 154 (GAIILHVIGMIYMFIALAIVC). The Cytoplasmic portion of the chain corresponds to 155 to 179 (DEFFVPSLTVITEKLGISDDVAGAT). The Alpha-1 repeat unit spans residues 175–215 (VAGATFMAAGGSAPELFTSLIGVFIAHSNVGIGTIVGSAVF). Residues 180 to 200 (FMAAGGSAPELFTSLIGVFIA) traverse the membrane as a helical segment. The Extracellular portion of the chain corresponds to 201-205 (HSNVG). A helical transmembrane segment spans residues 206-226 (IGTIVGSAVFNILFVIGMCAL). Over 227 to 244 (FSREILNLTWWPLFRDVS) the chain is Cytoplasmic. Residues 245–265 (FYIVDLIMLIIFFLDNVIMWW) form a helical membrane-spanning segment. A topological domain (extracellular) is located at residue Glu-266. The chain crosses the membrane as a helical span at residues 267 to 287 (SLLLLTAYFAYVVFMKFNVQV). Topologically, residues 288–506 (ERWVKQMINR…PDVRKPASKK (219 aa)) are cytoplasmic. The disordered stretch occupies residues 312 to 335 (ASTAGDKEEPTLPNKPRLQRGGSS). Phosphoserine is present on residues Ser-337 and Ser-341. 2 disordered regions span residues 394-414 (KCQV…DYAA) and 450-471 (AADA…LSLS). Residues 507 to 527 (FFPITFFGSITWIAVFSYLMV) form a helical membrane-spanning segment. Residues 528-542 (WWAHQVGETIGISEE) lie on the Extracellular side of the membrane. The chain crosses the membrane as a helical span at residues 543-563 (IMGLTILAAGTSIPDLITSVI). One copy of the Alpha-2 repeat lies at 550–581 (AAGTSIPDLITSVIVARKGLGDMAVSSSVGSN). At 564 to 578 (VARKGLGDMAVSSSV) the chain is on the cytoplasmic side. A helical membrane pass occupies residues 579–599 (GSNIFDITVGLPLPWLLYTII). At 600–611 (HRFKPVTVSSNG) the chain is on the extracellular side. The helical transmembrane segment at 612-632 (LFCAIVLLFIMLIFVILSIAL) threads the bilayer. Over 633–639 (CKWRMNK) the chain is Cytoplasmic. The helical transmembrane segment at 640-660 (ILGFIMFGLYFAFLVVSVLLE) threads the bilayer. The Extracellular portion of the chain corresponds to 661-670 (DKVLECPVSI).

Belongs to the Ca(2+):cation antiporter (CaCA) (TC 2.A.19) family. SLC24A subfamily. In terms of tissue distribution, expressed abundantly in all regions of the brain and weakly in the eye, large intestine and adrenal tissue.

The protein localises to the cell membrane. The enzyme catalyses Ca(2+)(out) + K(+)(out) + 4 Na(+)(in) = Ca(2+)(in) + K(+)(in) + 4 Na(+)(out). Calcium, potassium:sodium antiporter that transports 1 Ca(2+) and 1 K(+) in exchange for 4 Na(+). Required for learming and memory by regulating neuronal Ca(2+), which is essential for the development of synaptic plasticity. This chain is Sodium/potassium/calcium exchanger 2 (Slc24a2), found in Rattus norvegicus (Rat).